Here is a 426-residue protein sequence, read N- to C-terminus: Endothelin-1 receptor (426 aa).

The signal sequence occupies residues 1–20; it reads MGVLCFLASFWLALVGGAIA. Residues 21–80 are Extracellular-facing; the sequence is DNAERYSANLSSHVEDFTPFPGTEFNFLGTTLQPPNLALPSNGSMHGYCPQQTKITTAFK. N-linked (GlcNAc...) asparagine glycosylation is found at N29 and N62. The helical transmembrane segment at 81-102 threads the bilayer; that stretch reads YINTVISCTIFIVGMVGNATLL. At 103–112 the chain is on the cytoplasmic side; sequence RIIYQNKCMR. A helical transmembrane segment spans residues 113–132; sequence NGPNALIASLALGDLIYVVI. Residues 133–159 are Extracellular-facing; the sequence is DLPINVFKLLAGRWPFDHNDFGVFLCK. C158 and C239 are disulfide-bonded. A helical membrane pass occupies residues 160–181; sequence LFPFLQKSSVGITVLNLCALSV. Residues 182–205 are Cytoplasmic-facing; that stretch reads DRYRAVASWSRVQGIGIPLITAIE. A helical transmembrane segment spans residues 206-229; the sequence is IVSIWILSFILAIPEAIGFVMVPF. Residues 230–256 are Extracellular-facing; it reads EYKGEQHRTCMLNATTKFMEFYQDVKD. A helical membrane pass occupies residues 257-278; the sequence is WWLFGFYFCMPLVCTAIFYTLM. Over 279 to 306 the chain is Cytoplasmic; that stretch reads TCEMLNRRNGSLRIALSEHLKQRREVAK. Residues 307–328 form a helical membrane-spanning segment; sequence TVFCLVVIFALCWFPLHLSRIL. The Extracellular segment spans residues 329–347; it reads KKTVYDEMDKNRCELLSFL. The chain crosses the membrane as a helical span at residues 348–372; the sequence is LLMDYIGINLATMNSCINPIALYFV. The Cytoplasmic segment spans residues 373–426; the sequence is SKKFKNCFQSCLCCCCHQSKSLMTSVPMNGTSIQWKNQEQNHNTERSSHKDSMN. S424 is subject to Phosphoserine.

The protein belongs to the G-protein coupled receptor 1 family. Endothelin receptor subfamily. EDNRA sub-subfamily. In terms of assembly, interacts with HDAC7 and KAT5. In terms of tissue distribution, predominantly expressed in vascular smooth muscle cells of a variety of issues, bronchial smooth muscle cells, myocardium, and the pituitary gland.

The protein resides in the cell membrane. Receptor for endothelin-1. Mediates its action by association with G proteins that activate a phosphatidylinositol-calcium second messenger system. The rank order of binding affinities for ET-A is: ET1 &gt; ET2 &gt;&gt; ET3. This Rattus norvegicus (Rat) protein is Endothelin-1 receptor.